Reading from the N-terminus, the 342-residue chain is DNA primase small subunit PriS (342 aa).

Residues aspartate 97, aspartate 99, and aspartate 276 contribute to the active site.

The protein belongs to the eukaryotic-type primase small subunit family. Heterodimer of a small subunit (PriS) and a large subunit (PriL). Mg(2+) serves as cofactor. The cofactor is Mn(2+).

Catalytic subunit of DNA primase, an RNA polymerase that catalyzes the synthesis of short RNA molecules used as primers for DNA polymerase during DNA replication. The small subunit contains the primase catalytic core and has DNA synthesis activity on its own. Binding to the large subunit stabilizes and modulates the activity, increasing the rate of DNA synthesis while decreasing the length of the DNA fragments, and conferring RNA synthesis capability. The DNA polymerase activity may enable DNA primase to also catalyze primer extension after primer synthesis. May also play a role in DNA repair. In Thermococcus sibiricus (strain DSM 12597 / MM 739), this protein is DNA primase small subunit PriS.